Consider the following 743-residue polypeptide: Polyribonucleotide nucleotidyltransferase (743 aa).

2 residues coordinate Mg(2+): aspartate 489 and aspartate 495. The KH domain maps to 556-618 (PRIEKMHIGK…PCIDAAIGMI (63 aa)). Positions 628-698 (GETYPGKITS…KTGKFKLSRK (71 aa)) constitute an S1 motif domain. The tract at residues 704 to 743 (PEGYVEPQPRERRERREGGREGGRNFERRGGDRDHREPRG) is disordered.

It belongs to the polyribonucleotide nucleotidyltransferase family. It depends on Mg(2+) as a cofactor.

The protein resides in the cytoplasm. It catalyses the reaction RNA(n+1) + phosphate = RNA(n) + a ribonucleoside 5'-diphosphate. Functionally, involved in mRNA degradation. Catalyzes the phosphorolysis of single-stranded polyribonucleotides processively in the 3'- to 5'-direction. The polypeptide is Polyribonucleotide nucleotidyltransferase (Porphyromonas gingivalis (strain ATCC BAA-308 / W83)).